We begin with the raw amino-acid sequence, 254 residues long: Acidic endochitinase (254 aa).

Residues 1-23 (MKFWGSVLALSFVVFLFLTGTLA) form the signal peptide. Residue Glu91 is the Proton donor of the active site. Cys213 and Cys245 are joined by a disulfide.

The protein belongs to the glycosyl hydrolase 19 family. Chitinase class II subfamily.

Its subcellular location is the secreted. The enzyme catalyses Random endo-hydrolysis of N-acetyl-beta-D-glucosaminide (1-&gt;4)-beta-linkages in chitin and chitodextrins.. In terms of biological role, defense against chitin-containing fungal pathogens. The chain is Acidic endochitinase from Petunia hybrida (Petunia).